A 415-amino-acid chain; its full sequence is Putative transcription factor BOFH (415 aa).

The tract at residues 159–221 (SQEPVQHQDQ…NEGEDDDGMD (63 aa)) is disordered. Gly residues predominate over residues 174–183 (INGGGRGGYW). Basic residues predominate over residues 193-202 (QQQRRRKKRL). Over residues 206-220 (ETDDDGNEGEDDDGM) the composition is skewed to acidic residues. 3 consecutive DNA-binding regions follow at residues 234–238 (REHPF), 303–310 (NKPKMRHY), and 374–377 (YVPT).

Belongs to the FLO/LFY family. In terms of tissue distribution, acts in the floral primordia.

Its subcellular location is the nucleus. Functionally, controls floral meristem identity. Is required very early in flower development and may act here as a transcription factor. This is Putative transcription factor BOFH from Brassica oleracea var. botrytis (Cauliflower).